A 139-amino-acid chain; its full sequence is MEAVVFVFSLLDCCALIFLSVYFIITLSDLECDYINARSCCSKLNKWVIPELIGHTIVTVLLLMSLHWFIFLLNLPVATWNIYRYIMVPSGNMGVFDPTEIHNRGQLKSHMKEAMIKLGFHLLCFFMYLYSMILALIND.

The next 3 helical transmembrane spans lie at 5 to 25, 57 to 77, and 118 to 138; these read VFVF…YFII, IVTV…NLPV, and LGFH…ALIN.

The protein belongs to the cornichon family. As to quaternary structure, interacts with Sec23/24 complex components SEC24B and SEC24D. Interacts with CCR5. Interacts with ADRB2 in the early secretory pathway.

It is found in the membrane. The protein localises to the endoplasmic reticulum. Its subcellular location is the endoplasmic reticulum-Golgi intermediate compartment. In terms of biological role, involved in G protein-coupled receptors (GPCRs) trafficking from the endoplasmic reticulum to the cell surface; it promotes the exit of GPCRs from the early secretory pathway, likely through interaction with the COPII machinery. The sequence is that of Protein cornichon homolog 4 (CNIH4) from Homo sapiens (Human).